The primary structure comprises 701 residues: Probable cytosolic oligopeptidase A (701 aa).

Alanine 2 is subject to N-acetylalanine. Residues 148-194 (IALEDDKREEFNKIEQELEKLSHKFSENVLDATKKFEKLITDKKEIE) are a coiled coil. Zn(2+) is bound at residue histidine 483. The active site involves glutamate 484. Zn(2+) is bound by residues histidine 487 and glutamate 513. Substrate is bound at residue 615 to 621 (HIFAGGY).

This sequence belongs to the peptidase M3 family. It depends on Zn(2+) as a cofactor.

The protein resides in the cytoplasm. Its subcellular location is the cytosol. The enzyme catalyses Hydrolysis of oligopeptides, with broad specificity. Gly or Ala commonly occur as P1 or P1' residues, but more distant residues are also important, as is shown by the fact that Z-Gly-Pro-Gly-|-Gly-Pro-Ala is cleaved, but not Z-(Gly)(5).. With respect to regulation, inhibited by salicylic acid. Oligopeptidase that may be involved in the degradation of proteasome-generated peptides. Binds salicylic acid. The polypeptide is Probable cytosolic oligopeptidase A (Arabidopsis thaliana (Mouse-ear cress)).